A 446-amino-acid chain; its full sequence is Chromosomal replication initiator protein DnaA (446 aa).

A domain I, interacts with DnaA modulators region spans residues 1–72; it reads MENILDLWNQ…ADTIYELTGE (72 aa). The tract at residues 72–109 is domain II; it reads EELSVKFVIPQNQDEENFLPKPQVKKAAKEEPSDFPQS. The domain III, AAA+ region stretch occupies residues 110 to 326; the sequence is MLNPKYTFDT…GALIRVVAYS (217 aa). ATP contacts are provided by glycine 154, glycine 156, lysine 157, and threonine 158. Residues 327-446 are domain IV, binds dsDNA; sequence SLINKDINAD…QVKEIKELLK (120 aa).

Belongs to the DnaA family. In terms of assembly, oligomerizes as a right-handed, spiral filament on DNA at oriC.

The protein resides in the cytoplasm. Its function is as follows. Plays an essential role in the initiation and regulation of chromosomal replication. ATP-DnaA binds to the origin of replication (oriC) to initiate formation of the DNA replication initiation complex once per cell cycle. Binds the DnaA box (a 9 base pair repeat at the origin) and separates the double-stranded (ds)DNA. Forms a right-handed helical filament on oriC DNA; dsDNA binds to the exterior of the filament while single-stranded (ss)DNA is stabiized in the filament's interior. The ATP-DnaA-oriC complex binds and stabilizes one strand of the AT-rich DNA unwinding element (DUE), permitting loading of DNA polymerase. After initiation quickly degrades to an ADP-DnaA complex that is not apt for DNA replication. Binds acidic phospholipids. The chain is Chromosomal replication initiator protein DnaA from Bacillus velezensis (strain DSM 23117 / BGSC 10A6 / LMG 26770 / FZB42) (Bacillus amyloliquefaciens subsp. plantarum).